The chain runs to 492 residues: N-succinylglutamate 5-semialdehyde dehydrogenase (492 aa).

Residue 220-225 (GSANTG) participates in NAD(+) binding. Residues glutamate 243 and cysteine 277 contribute to the active site.

This sequence belongs to the aldehyde dehydrogenase family. AstD subfamily.

The catalysed reaction is N-succinyl-L-glutamate 5-semialdehyde + NAD(+) + H2O = N-succinyl-L-glutamate + NADH + 2 H(+). It participates in amino-acid degradation; L-arginine degradation via AST pathway; L-glutamate and succinate from L-arginine: step 4/5. Catalyzes the NAD-dependent reduction of succinylglutamate semialdehyde into succinylglutamate. In Escherichia coli (strain K12 / MC4100 / BW2952), this protein is N-succinylglutamate 5-semialdehyde dehydrogenase.